Consider the following 421-residue polypeptide: Structure-specific endonuclease subunit SLX1 (421 aa).

The 83-residue stretch at 13–95 (AFYCCYLLRS…QHTKESRHAE (83 aa)) folds into the GIY-YIG domain. 2 disordered regions span residues 34–57 (TPEP…KTSS) and 96–120 (VERC…KRAG). Residues 225–280 (CGVCKQRLNPRNDMIAICSHSLCRCASHLLCLSAHFLEAAGFIGKLIPKEGTCPAC) form an SLX1-type zinc finger. Positions 310 to 322 (RRRTEQVGKRKIS) are enriched in basic residues. The tract at residues 310–339 (RRRTEQVGKRKISNHVSSEKGESEASMPST) is disordered.

The protein belongs to the SLX1 family. Forms a heterodimer with SLX4. It depends on a divalent metal cation as a cofactor.

Its subcellular location is the nucleus. Catalytic subunit of the SLX1-SLX4 structure-specific endonuclease that resolves DNA secondary structures generated during DNA repair and recombination. Has endonuclease activity towards branched DNA substrates, introducing single-strand cuts in duplex DNA close to junctions with ss-DNA. This Ajellomyces capsulatus (strain G186AR / H82 / ATCC MYA-2454 / RMSCC 2432) (Darling's disease fungus) protein is Structure-specific endonuclease subunit SLX1.